The chain runs to 284 residues: Shikimate dehydrogenase (NADP(+)) (284 aa).

Residues 20-22 (SIS) and Ser-67 contribute to the shikimate site. Lys-71 serves as the catalytic Proton acceptor. Asp-83 serves as a coordination point for NADP(+). Residues Asn-92 and Asp-107 each contribute to the shikimate site. NADP(+)-binding positions include 129–133 (GAGGA) and Ile-227. Tyr-229 provides a ligand contact to shikimate. Position 250 (Gly-250) interacts with NADP(+).

It belongs to the shikimate dehydrogenase family. In terms of assembly, homodimer.

The catalysed reaction is shikimate + NADP(+) = 3-dehydroshikimate + NADPH + H(+). It functions in the pathway metabolic intermediate biosynthesis; chorismate biosynthesis; chorismate from D-erythrose 4-phosphate and phosphoenolpyruvate: step 4/7. Its function is as follows. Involved in the biosynthesis of the chorismate, which leads to the biosynthesis of aromatic amino acids. Catalyzes the reversible NADPH linked reduction of 3-dehydroshikimate (DHSA) to yield shikimate (SA). The chain is Shikimate dehydrogenase (NADP(+)) from Streptococcus pneumoniae (strain P1031).